Consider the following 206-residue polypeptide: N-(5'-phosphoribosyl)anthranilate isomerase (206 aa).

This sequence belongs to the TrpF family.

It carries out the reaction N-(5-phospho-beta-D-ribosyl)anthranilate = 1-(2-carboxyphenylamino)-1-deoxy-D-ribulose 5-phosphate. The protein operates within amino-acid biosynthesis; L-tryptophan biosynthesis; L-tryptophan from chorismate: step 3/5. This is N-(5'-phosphoribosyl)anthranilate isomerase from Pseudomonas syringae pv. syringae (strain B728a).